The chain runs to 124 residues: SETAAEKFERQHMDSYSSSSSNSNYCNQMMKRREMTDGWCKPVNTFIHESLEDVQAVCSQKSVTCKNGQTNCHQSSTTMHITDCRETGSSKYPNCAYKASNLQKHIIIACEGNPYVPVHFDASV.

A compositionally biased stretch (basic and acidic residues) spans 1 to 13 (SETAAEKFERQHM). Residues 1-23 (SETAAEKFERQHMDSYSSSSSNS) are disordered. K7 and R10 together coordinate substrate. The Proton acceptor role is filled by H12. 4 disulfides stabilise this stretch: C26–C84, C40–C95, C58–C110, and C65–C72. Substrate contacts are provided by residues 41-45 (KPVNT), K66, and R85. H119 functions as the Proton donor in the catalytic mechanism.

The protein belongs to the pancreatic ribonuclease family. In terms of assembly, monomer. Interacts with and forms tight 1:1 complexes with RNH1. Dimerization of two such complexes may occur. Interaction with RNH1 inhibits this protein. In terms of tissue distribution, pancreas.

The protein localises to the secreted. It catalyses the reaction an [RNA] containing cytidine + H2O = an [RNA]-3'-cytidine-3'-phosphate + a 5'-hydroxy-ribonucleotide-3'-[RNA].. The catalysed reaction is an [RNA] containing uridine + H2O = an [RNA]-3'-uridine-3'-phosphate + a 5'-hydroxy-ribonucleotide-3'-[RNA].. Its function is as follows. Endonuclease that catalyzes the cleavage of RNA on the 3' side of pyrimidine nucleotides. Acts on single-stranded and double-stranded RNA. In Camelus bactrianus (Bactrian camel), this protein is Ribonuclease pancreatic (RNASE1).